We begin with the raw amino-acid sequence, 484 residues long: tRNA sulfurtransferase (484 aa).

The region spanning 63-167 (QAFGERLACI…GDKLYMVTKR (105 aa)) is the THUMP domain. Residues 185 to 186 (LI), Lys-267, Gly-289, and Gln-298 contribute to the ATP site. Cys-346 and Cys-458 are joined by a disulfide. Residues 406–484 (IDTNEVVIDI…GYHNVKVYRP (79 aa)) form the Rhodanese domain. The Cysteine persulfide intermediate role is filled by Cys-458.

It belongs to the ThiI family.

It is found in the cytoplasm. The catalysed reaction is [ThiI sulfur-carrier protein]-S-sulfanyl-L-cysteine + a uridine in tRNA + 2 reduced [2Fe-2S]-[ferredoxin] + ATP + H(+) = [ThiI sulfur-carrier protein]-L-cysteine + a 4-thiouridine in tRNA + 2 oxidized [2Fe-2S]-[ferredoxin] + AMP + diphosphate. The enzyme catalyses [ThiS sulfur-carrier protein]-C-terminal Gly-Gly-AMP + S-sulfanyl-L-cysteinyl-[cysteine desulfurase] + AH2 = [ThiS sulfur-carrier protein]-C-terminal-Gly-aminoethanethioate + L-cysteinyl-[cysteine desulfurase] + A + AMP + 2 H(+). Its pathway is cofactor biosynthesis; thiamine diphosphate biosynthesis. Catalyzes the ATP-dependent transfer of a sulfur to tRNA to produce 4-thiouridine in position 8 of tRNAs, which functions as a near-UV photosensor. Also catalyzes the transfer of sulfur to the sulfur carrier protein ThiS, forming ThiS-thiocarboxylate. This is a step in the synthesis of thiazole, in the thiamine biosynthesis pathway. The sulfur is donated as persulfide by IscS. The chain is tRNA sulfurtransferase from Shewanella oneidensis (strain ATCC 700550 / JCM 31522 / CIP 106686 / LMG 19005 / NCIMB 14063 / MR-1).